Here is a 487-residue protein sequence, read N- to C-terminus: Diacylglycerol kinase 4 (487 aa).

The DAGKc domain occupies 86 to 242 (TPEVPLMVFV…LDSWNILITM (157 aa)).

The protein belongs to the eukaryotic diacylglycerol kinase family. In terms of assembly, monomer. Highly expressed in pollen grains. Expressed in roots, hypocotyls, leaf vasculature, developing anthers and stigmas, and receptacles of siliques.

The protein resides in the endoplasmic reticulum. Its subcellular location is the cytoplasm. It is found in the cytosol. The catalysed reaction is a 1,2-diacyl-sn-glycerol + ATP = a 1,2-diacyl-sn-glycero-3-phosphate + ADP + H(+). Its function is as follows. Phosphorylates the second messenger diacylglycerol (DAG) to generate phosphatidic acid (PA), another important signaling molecule. PA is required for plant development and responses to abiotic stress and pathogen attack. May be involved in the accumulation of PA during cold stress. Involved in the regulation of PA and phosphatidylcholine biosynthesis in growing pollen tubes. Required for nitric oxide-dependent pollen tube growth and re-orientation responses. Functions together with DGK2 in male gametophyte development and biosynthesis of phosphatidylglycerol and phosphatidylinositol in the endoplasmic reticulum (ER). Involved in PA production for pollen grain growth, as well as leaf and root growth. Possesses guanylyl cyclase activity in vitro. The sequence is that of Diacylglycerol kinase 4 from Arabidopsis thaliana (Mouse-ear cress).